Reading from the N-terminus, the 288-residue chain is Leucine-rich repeat-containing protein 72 (288 aa).

LRR repeat units lie at residues 47 to 68 (DVFE…SRFK), 69 to 90 (KLKY…TRNY), 91 to 112 (CLAE…HYLP), and 113 to 134 (SLHI…VKEL). Positions 148-186 (NPLCQYNLYRLYIIYHLPGVELLDRNQVTEKERRSMITL) constitute an LRRCT domain.

The protein is Leucine-rich repeat-containing protein 72 (LRRC72) of Bos taurus (Bovine).